Here is a 290-residue protein sequence, read N- to C-terminus: Protein MGF 110-9L (290 aa).

3 helical membrane-spanning segments follow: residues 1–19 (MKVIVFLLVLLEMQRVIQN), 128–148 (VENIKHTCLCMVATIALMVYI), and 163–183 (LLIFLGIYLLLGILMTNIIMN). Asn242 and Asn267 each carry an N-linked (GlcNAc...) asparagine; by host glycan.

This sequence belongs to the asfivirus MGF 110 family.

Its subcellular location is the host membrane. In terms of biological role, plays a role in virus cell tropism, and may be required for efficient virus replication in macrophages. The chain is Protein MGF 110-9L from Ornithodoros (relapsing fever ticks).